The primary structure comprises 219 residues: Small ribosomal subunit protein uS3 (219 aa).

The region spanning 38–106 (IREYINVRLK…RVHINILEVK (69 aa)) is the KH type-2 domain.

This sequence belongs to the universal ribosomal protein uS3 family. Part of the 30S ribosomal subunit. Forms a tight complex with proteins S10 and S14.

In terms of biological role, binds the lower part of the 30S subunit head. Binds mRNA in the 70S ribosome, positioning it for translation. The sequence is that of Small ribosomal subunit protein uS3 from Bacillus thuringiensis (strain Al Hakam).